The sequence spans 79 residues: Beta-defensin 130 (79 aa).

The first 22 residues, 1 to 22 (MKLHSLISVLLLFVTLIPKGKT), serve as a signal peptide directing secretion. Disulfide bonds link cysteine 38-cysteine 53 and cysteine 43-cysteine 60.

The protein belongs to the beta-defensin family.

It localises to the secreted. Its function is as follows. Antimicrobial host-defense peptide. In Pan troglodytes (Chimpanzee), this protein is Beta-defensin 130.